Consider the following 125-residue polypeptide: Small ribosomal subunit protein uS12 (125 aa).

The residue at position 89 (Asp-89) is a 3-methylthioaspartic acid.

This sequence belongs to the universal ribosomal protein uS12 family. In terms of assembly, part of the 30S ribosomal subunit. Contacts proteins S8 and S17. May interact with IF1 in the 30S initiation complex.

In terms of biological role, with S4 and S5 plays an important role in translational accuracy. Its function is as follows. Interacts with and stabilizes bases of the 16S rRNA that are involved in tRNA selection in the A site and with the mRNA backbone. Located at the interface of the 30S and 50S subunits, it traverses the body of the 30S subunit contacting proteins on the other side and probably holding the rRNA structure together. The combined cluster of proteins S8, S12 and S17 appears to hold together the shoulder and platform of the 30S subunit. The polypeptide is Small ribosomal subunit protein uS12 (Bordetella avium (strain 197N)).